Consider the following 549-residue polypeptide: Calcium-dependent protein kinase 5 (549 aa).

G2 carries the N-myristoyl glycine lipid modification. Residues 43-69 (DEPAGKKAPRGSAAAADAPHAASMKRG) are disordered. Low complexity predominate over residues 52 to 64 (RGSAAAADAPHAA). The region spanning 92–350 (YALGRKLGQG…AHEVLCHPWI (259 aa)) is the Protein kinase domain. ATP-binding positions include 98 to 106 (LGQGQFGTT) and K121. The active-site Proton acceptor is the D216. Positions 356-386 (APDRPLDPAVLSRIKQFSAMNKLKKMALRVI) are autoinhibitory domain. 4 consecutive EF-hand domains span residues 393–428 (EEIAGLKEMFKAMDTDNSGAITYDELKEGMRKYGST), 429–464 (LKDTEIRDLMEAADVDNSGTIDYIEFIAATLHLNKL), 465–500 (EREEHLVAAFSYFDKDGSGYITVDELQQACKEHNMP), and 501–534 (DAFLDDVIKEADQDNDGRIDYGEFVAMMTKGNMG). 19 residues coordinate Ca(2+): D406, D408, S410, E417, D442, D444, S446, T448, E453, D478, D480, S482, Y484, E489, D512, D514, D516, R518, and E523.

This sequence belongs to the protein kinase superfamily. Ser/Thr protein kinase family. CDPK subfamily.

The protein resides in the membrane. It catalyses the reaction L-seryl-[protein] + ATP = O-phospho-L-seryl-[protein] + ADP + H(+). The catalysed reaction is L-threonyl-[protein] + ATP = O-phospho-L-threonyl-[protein] + ADP + H(+). Activated by calcium. Autophosphorylation may play an important role in the regulation of the kinase activity. Its function is as follows. May play a role in signal transduction pathways that involve calcium as a second messenger. The chain is Calcium-dependent protein kinase 5 from Oryza sativa subsp. japonica (Rice).